Here is a 739-residue protein sequence, read N- to C-terminus: Poly(A) polymerase alpha (739 aa).

A compositionally biased stretch (low complexity) spans 1-17 (MPFPVTTQGSQQTQPPQ). Positions 1 to 22 (MPFPVTTQGSQQTQPPQRHYGI) are disordered. Phosphoserine is present on residues Ser10 and Ser24. ATP is bound by residues 100-102 (FGS), Thr109, 113-115 (DID), Asp167, Lys228, Tyr237, and 246-247 (GV). The Mg(2+) site is built by Asp113, Asp115, and Asp167. Residues Lys444, Lys445, Lys506, and Lys507 each participate in a glycyl lysine isopeptide (Lys-Gly) (interchain with G-Cter in SUMO) cross-link. The Nuclear localization signal 1 motif lies at 490 to 507 (RKQLHQLLPSHVLQKRKK). The interval 508 to 643 (HSTEGVKLTA…TKVPNPIVGV (136 aa)) is ser/Thr-rich. A compositionally biased stretch (low complexity) spans 523–534 (LDLSMDSDNSMS). Residues 523–725 (LDLSMDSDNS…SDIPALPANP (203 aa)) form a disordered region. Residues 535–557 (VPSPTSAMKTSPLNSSGSSQGRN) are compositionally biased toward polar residues. Ser537 bears the Phosphoserine; by MAPK mark. Ser558 carries the post-translational modification Phosphoserine. Residues 566–582 (ASVTSIQASEVSVPQAN) show a composition bias toward polar residues. Low complexity-rich tracts occupy residues 583 to 594 (SSESPGGPSSES) and 611 to 622 (TVSRVVSSTRLV). 2 positions are modified to N6-acetyllysine: Lys635 and Lys644. A Nuclear localization signal 2 motif is present at residues 644–659 (KRTSSPNKEESPKKTK). Basic and acidic residues-rich tracts occupy residues 650–660 (NKEESPKKTKT) and 676–686 (GHDKTETKEQV). A required for interaction with NUDT21 region spans residues 671–739 (CLALSGHDKT…KNSIKLRLNR (69 aa)). Over residues 691-715 (SAVQSETVPASASLLASQKTSSTDL) the composition is skewed to polar residues. The residue at position 730 (Lys730) is an N6-acetyllysine; alternate. Residue Lys730 forms a Glycyl lysine isopeptide (Lys-Gly) (interchain with G-Cter in SUMO); alternate linkage. Ser732 carries the post-translational modification Phosphoserine. At Lys734 the chain carries N6-acetyllysine; alternate. Lys734 participates in a covalent cross-link: Glycyl lysine isopeptide (Lys-Gly) (interchain with G-Cter in SUMO); alternate.

The protein belongs to the poly(A) polymerase family. Monomer. Found in a complex with CPSF1, FIP1L1 and PAPOLA. Interacts with AHCYL1 and FIP1L1; the interaction with AHCYL1 seems to increase interaction with FIP1L1. Interacts with NUDT21; the interaction is diminished by acetylation. Interacts with KPNB1; the interaction promotes PAP nuclear import and is inhibited by acetylation of PAP. The cofactor is Mg(2+). It depends on Mn(2+) as a cofactor. In terms of processing, polysumoylated. Varying sumoylation depending on tissue- and cell-type. Highly sumoylated in bladder and NIH 3T3 cells. Sumoylation is required for nuclear localization and enhances PAP stability. Desumoylated by SENP1. Inhibits polymerase activity. Hyperphosphorylation on multiple CDK2 consensus and non-consensus sites in the C-terminal Ser/Thr-rich region represses PAP activity in late M-phase. Phosphorylation/dephosphorylation may regulate the interaction between PAP and CPSF. Post-translationally, acetylated in the C-terminus. Acetylation decreases interaction with NUDT21 and KPNB1, and inhibits nuclear localization through inhibiting binding to the importin alpha/beta complex. In terms of tissue distribution, expressed in brain, thymus, lung, kidney, bladder, testis and spleen.

The protein resides in the nucleus. The catalysed reaction is RNA(n) + ATP = RNA(n)-3'-adenine ribonucleotide + diphosphate. Functionally, polymerase that creates the 3'-poly(A) tail of mRNA's. Also required for the endoribonucleolytic cleavage reaction at some polyadenylation sites. May acquire specificity through interaction with a cleavage and polyadenylation specificity factor (CPSF) at its C-terminus. This Mus musculus (Mouse) protein is Poly(A) polymerase alpha (Papola).